The primary structure comprises 205 residues: Venom allergen 5 (205 aa).

Intrachain disulfides connect Cys-4–Cys-16, Cys-8–Cys-104, Cys-28–Cys-96, and Cys-171–Cys-188. The 144-residue stretch at Val-47–Tyr-190 folds into the SCP domain.

This sequence belongs to the CRISP family. Venom allergen 5-like subfamily. In terms of tissue distribution, expressed by the venom gland.

The protein resides in the secreted. The sequence is that of Venom allergen 5 from Polistes fuscatus (Paper wasp).